A 356-amino-acid polypeptide reads, in one-letter code: Heme A synthase (356 aa).

Transmembrane regions (helical) follow at residues 24–44 (IAIW…VGGV), 106–126 (FHRL…VYFM), 139–159 (LLGI…MVMS), 174–194 (AHLG…TGLI), and 214–234 (AWML…VAGI). Histidine 276 is a heme binding site. The next 3 helical transmembrane spans lie at 278-298 (LIAW…KQLS), 309-329 (LLLL…LLSV), and 331-351 (LTFA…ALWV). Histidine 337 contributes to the heme binding site.

The protein belongs to the COX15/CtaA family. Type 2 subfamily. Interacts with CtaB. It depends on heme b as a cofactor.

The protein localises to the cell membrane. The enzyme catalyses Fe(II)-heme o + 2 A + H2O = Fe(II)-heme a + 2 AH2. Its pathway is porphyrin-containing compound metabolism; heme A biosynthesis; heme A from heme O: step 1/1. In terms of biological role, catalyzes the conversion of heme O to heme A by two successive hydroxylations of the methyl group at C8. The first hydroxylation forms heme I, the second hydroxylation results in an unstable dihydroxymethyl group, which spontaneously dehydrates, resulting in the formyl group of heme A. In Nitrosomonas eutropha (strain DSM 101675 / C91 / Nm57), this protein is Heme A synthase.